The primary structure comprises 155 residues: WPP domain-containing protein 1 (155 aa).

Disordered stretches follow at residues 1–41 (MAET…VTIS) and 124–155 (SVKAKSNVASPPPKDGDGIESAVDSKIDSSEA). The span at 7–39 (ESITTSSPPPISETENSTTLPTTETEKNPNPVT) shows a compositional bias: low complexity. Residues 28–131 (TTETEKNPNP…LESVKAKSNV (104 aa)) are WPP. The segment covering 146-155 (VDSKIDSSEA) has biased composition (basic and acidic residues).

As to quaternary structure, binds to FPP proteins. Interacts with WAP, WIP1, WIP2 and WIP3 through its WPP domain. Interacts with HSP70-1, HSP70-3 and WIT1. Component of a ternary complex composed of WPP1, HSP70-1 and WIT1. In terms of tissue distribution, expressed in roots, stems and leaves.

It localises to the nucleus envelope. It is found in the cytoplasm. Its subcellular location is the nucleus. The protein localises to the golgi apparatus. The protein resides in the nucleus matrix. Regulates the mitotic activity in roots. Plays a role with HSP70-1 in facilitating WIT1 nuclear envelope targeting. This chain is WPP domain-containing protein 1 (WPP1), found in Arabidopsis thaliana (Mouse-ear cress).